The chain runs to 241 residues: Nicotinamide riboside kinase (241 aa).

Position 21 to 29 (21 to 29) interacts with ATP; the sequence is GCSSSGKST. 2 residues coordinate Mg(2+): Ser28 and Asp47. The Proton acceptor role is filled by Asp47. Substrate is bound by residues 47 to 50, 67 to 68, and Asp68; these read DDFY and WD. Arg163 is an ATP binding site. Position 164 (Arg164) interacts with substrate. ATP contacts are provided by residues Arg167, 167–169, and 213–215; these read RGG and DVQ. 169 to 170 lines the substrate pocket; that stretch reads GY.

It belongs to the uridine kinase family. NRK subfamily.

It catalyses the reaction beta-nicotinamide D-riboside + ATP = beta-nicotinamide D-ribonucleotide + ADP + H(+). It carries out the reaction beta-D-ribosylnicotinate + ATP = nicotinate beta-D-ribonucleotide + ADP + H(+). Its pathway is cofactor biosynthesis; NAD(+) biosynthesis. In terms of biological role, catalyzes the phosphorylation of nicotinamide riboside (NR) and nicotinic acid riboside (NaR) to form nicotinamide mononucleotide (NMN) and nicotinic acid mononucleotide (NaMN). The protein is Nicotinamide riboside kinase (NRK1) of Eremothecium gossypii (strain ATCC 10895 / CBS 109.51 / FGSC 9923 / NRRL Y-1056) (Yeast).